The primary structure comprises 755 residues: Diamine oxidase [copper-containing] (755 aa).

A signal peptide spans 1–24 (MGRGTLALGWAGAALLLLQMLAAA). N-linked (GlcNAc...) asparagine glycosylation is present at N115. An intrachain disulfide couples C182 to C186. The Proton acceptor role is filled by D376. C394 and C420 are joined by a disulfide. Catalysis depends on Y464, which acts as the Schiff-base intermediate with substrate; via topaquinone. Y464 bears the 2',4',5'-topaquinone mark. H513 and H515 together coordinate Cu(2+). Ca(2+)-binding residues include D522, L523, and D524. N541 carries an N-linked (GlcNAc...) asparagine glycan. Ca(2+) contacts are provided by E565, F656, N659, E661, D667, and L668. H678 is a Cu(2+) binding site. An N-linked (GlcNAc...) asparagine glycan is attached at N749.

The protein belongs to the copper/topaquinone oxidase family. As to quaternary structure, homodimer; disulfide-linked. Cu(2+) serves as cofactor. Requires Ca(2+) as cofactor. The cofactor is L-topaquinone. Topaquinone (TPQ) is generated by copper-dependent autoxidation of a specific tyrosyl residue. Post-translationally, N-glycosylated; the glycans are primarily linear, di-, or tribranched fucosylated complex type.

Its subcellular location is the secreted. It localises to the extracellular space. It is found in the cell membrane. It carries out the reaction histamine + O2 + H2O = imidazole-4-acetaldehyde + H2O2 + NH4(+). It catalyses the reaction N(tau)-methylhistamine + O2 + H2O = 1-methylimidazole-4-acetaldehyde + H2O2 + NH4(+). The enzyme catalyses putrescine + O2 + H2O = 4-aminobutanal + H2O2 + NH4(+). The catalysed reaction is cadaverine + O2 + H2O = 5-aminopentanal + H2O2 + NH4(+). With respect to regulation, inhibited by amiloride and amiloride analogs. Catalyzes the oxidative deamination of primary amines to the corresponding aldehydes with the concomitant production of hydrogen peroxide and ammonia. Its preferred substrates in vitro are the diamines histamine and 1-methylhistamine and it could therefore play a role in allergic and immune responses. Has a broad specificity for diamines and can also act on cadaverine and putrescine, two products of amino acid catabolism. It could also act on polyamines, like spermidine and spermine though less efficiently, and regulate various biological processes. The chain is Diamine oxidase [copper-containing] from Sus scrofa (Pig).